We begin with the raw amino-acid sequence, 237 residues long: MEFEPALIEVTLLRRYKRFLADVRTPDGREFTAHCPNTGSMMGCMEPGSRVWLSHSPDPKRKYAHTWQLVEAEGALVGINTGLSNRLVEEAIGSGLIAELAGWPGLRREVRYGDQGSRIDLLLEDGERRCYVEVKNVTAAVSEGVAIFPDAVSARGSKHLEELMLMVREGHQAALVFCVQRGDVHTVRPADAIDPLYGQRLREAAQAGVRVLACGARVWPGGVVLERVLDVDLSRAG.

It belongs to the SfsA family.

The chain is Sugar fermentation stimulation protein homolog from Thioalkalivibrio sulfidiphilus (strain HL-EbGR7).